The sequence spans 309 residues: 2-phospho-L-lactate transferase (309 aa).

7,8-didemethyl-8-hydroxy-5-deazariboflavin-binding residues include Asp50 and Arg89.

This sequence belongs to the CofD family. In terms of assembly, homodimer. The cofactor is Mg(2+).

It catalyses the reaction (2S)-lactyl-2-diphospho-5'-guanosine + 7,8-didemethyl-8-hydroxy-5-deazariboflavin = oxidized coenzyme F420-0 + GMP + H(+). Its pathway is cofactor biosynthesis; coenzyme F420 biosynthesis. In terms of biological role, catalyzes the transfer of the 2-phospholactate moiety from (2S)-lactyl-2-diphospho-5'-guanosine to 7,8-didemethyl-8-hydroxy-5-deazariboflavin (FO) with the formation of oxidized coenzyme F420-0 and GMP. In Methanococcus maripaludis (strain DSM 14266 / JCM 13030 / NBRC 101832 / S2 / LL), this protein is 2-phospho-L-lactate transferase.